Reading from the N-terminus, the 245-residue chain is DnaJ homolog subfamily B member 6-B (245 aa).

Residues 3 to 69 form the J domain; sequence EYYDVLGVQR…KKRDIYDKYG (67 aa).

Homooligomer.

The protein localises to the cytoplasm. The protein resides in the perinuclear region. It is found in the nucleus. In terms of biological role, has a stimulatory effect on the ATPase activity of HSP70 in a dose-dependent and time-dependent manner and hence acts as a co-chaperone of HSP70. Plays an indispensable role in the organization of KRT8/KRT18 filaments. Acts as an endogenous molecular chaperone for neuronal proteins including huntingtin. Suppresses aggregation and toxicity of polyglutamine-containing, aggregation-prone proteins. Also reduces cellular toxicity and caspase-3 activity. The sequence is that of DnaJ homolog subfamily B member 6-B (dnajb6-b) from Xenopus laevis (African clawed frog).